A 64-amino-acid polypeptide reads, in one-letter code: Putative antitoxin AF_1074 (64 aa).

The protein belongs to the UPF0165 family.

In terms of biological role, possibly the antitoxin component of a type II toxin-antitoxin (TA) system. This chain is Putative antitoxin AF_1074, found in Archaeoglobus fulgidus (strain ATCC 49558 / DSM 4304 / JCM 9628 / NBRC 100126 / VC-16).